The chain runs to 425 residues: UPF0597 protein Swoo_4889 (425 aa).

It belongs to the UPF0597 family.

This Shewanella woodyi (strain ATCC 51908 / MS32) protein is UPF0597 protein Swoo_4889.